Here is a 137-residue protein sequence, read N- to C-terminus: Nucleoside diphosphate kinase (137 aa).

The ATP site is built by K11, F59, R87, T93, R104, and N114. H117 serves as the catalytic Pros-phosphohistidine intermediate.

Belongs to the NDK family. In terms of assembly, homotetramer. Mg(2+) is required as a cofactor.

It is found in the cytoplasm. It carries out the reaction a 2'-deoxyribonucleoside 5'-diphosphate + ATP = a 2'-deoxyribonucleoside 5'-triphosphate + ADP. The catalysed reaction is a ribonucleoside 5'-diphosphate + ATP = a ribonucleoside 5'-triphosphate + ADP. In terms of biological role, major role in the synthesis of nucleoside triphosphates other than ATP. The ATP gamma phosphate is transferred to the NDP beta phosphate via a ping-pong mechanism, using a phosphorylated active-site intermediate. This chain is Nucleoside diphosphate kinase, found in Parafrankia sp. (strain EAN1pec).